Here is a 1033-residue protein sequence, read N- to C-terminus: uncharacterized protein (1033 aa).

Coiled-coil stretches lie at residues 212–326, 405–582, 615–771, and 797–1019; these read EIFK…KMNN, ILNN…LYKF, LEKE…LKLN, and KMKI…NIDN.

This is an uncharacterized protein from Plasmodium falciparum (isolate 3D7).